A 291-amino-acid polypeptide reads, in one-letter code: Phosphatidylglycerol--prolipoprotein diacylglyceryl transferase (291 aa).

7 consecutive transmembrane segments (helical) span residues 21–41 (VALH…MWLA), 60–80 (LLYA…VLFY), 96–116 (WDGG…MIIF), 130–150 (FIAP…FING), 198–218 (SQLY…NLFI), 225–245 (GAVS…VEFF), and 260–280 (ISMG…MMVW). Arg143 is a binding site for a 1,2-diacyl-sn-glycero-3-phospho-(1'-sn-glycerol).

It belongs to the Lgt family.

The protein localises to the cell inner membrane. It carries out the reaction L-cysteinyl-[prolipoprotein] + a 1,2-diacyl-sn-glycero-3-phospho-(1'-sn-glycerol) = an S-1,2-diacyl-sn-glyceryl-L-cysteinyl-[prolipoprotein] + sn-glycerol 1-phosphate + H(+). The protein operates within protein modification; lipoprotein biosynthesis (diacylglyceryl transfer). Functionally, catalyzes the transfer of the diacylglyceryl group from phosphatidylglycerol to the sulfhydryl group of the N-terminal cysteine of a prolipoprotein, the first step in the formation of mature lipoproteins. In Salmonella newport (strain SL254), this protein is Phosphatidylglycerol--prolipoprotein diacylglyceryl transferase.